A 265-amino-acid polypeptide reads, in one-letter code: Mlc titration factor A (265 aa).

The Zn(2+) site is built by His111, His148, His152, and Glu211.

The protein belongs to the MtfA family. In terms of assembly, interacts with Mlc. Zn(2+) serves as cofactor.

The protein resides in the cytoplasm. Functionally, involved in the modulation of the activity of the glucose-phosphotransferase system (glucose-PTS). Interacts with the transcriptional repressor Mlc, preventing its interaction with DNA and leading to the modulation of expression of genes regulated by Mlc, including ptsG, which encodes the PTS system glucose-specific EIICB component. Shows zinc-dependent metallopeptidase activity. The polypeptide is Mlc titration factor A (Shigella dysenteriae serotype 1 (strain Sd197)).